Here is a 184-residue protein sequence, read N- to C-terminus: MKKQDISVKTVVAIGIGAAVFVILGRFVVIPTGFPNTNIETSYAFLALISAIFGPFAGLMTGLIGHAIKDFTTYGSAWWSWVICSGIIGCLYGWIGLKLNLSSGRFSRKSMIYFNTGQIIANIICWALIAPTLDILIYNEPANKVYTQGVISAVLNIISVGIIGTILLKAYASSQIKKGSLRKE.

The next 5 membrane-spanning stretches (helical) occupy residues Val11–Pro31, Ala44–Ile64, Ala77–Leu97, Gly117–Ile137, and Gln148–Leu168.

It belongs to the UPF0397 family.

It localises to the cell membrane. The polypeptide is UPF0397 protein SAR2767 (Staphylococcus aureus (strain MRSA252)).